The following is a 269-amino-acid chain: MRCIIKRLFQNILTRSKRGSADGGSAEALPPKSLRQFVGGAYKEVGAEFVGYLVDLCGLQPDEAVLDVGCGSGRMALPLTGYLNSEGRYAGFDISQKAIAWCQEHITSAHPNFQFEVSDIYNSLYNPKGKYQSLDFRFPYPDASFDVVFLTSVFTHMFPPDVEHYLDEISRVLKPGGRCLSTYFLLNDESLAHIAEGKSAHNFQHEGPGYRTIHKKRPEEAIGLPETFVRDVYGKFGLAVHEPLHYGSWSGREPHLSFQDIVIATKTAS.

This sequence belongs to the methyltransferase superfamily.

The sequence is that of Uncharacterised methyltransferase MT1546 from Mycobacterium tuberculosis (strain CDC 1551 / Oshkosh).